A 372-amino-acid polypeptide reads, in one-letter code: MKKGFSLPLWVTGAAKSAVKKLTGLPFEDYELIKIPNDKNLIKIKVHSAGLIKDESHALGISFADSGLDLDVTQNLEIWTIAFLEKTYEKDNNSLDLINIIPGYGVGIDQKTSEICISKFAKEVLFENLLEILPAGYKLNLEIIFPNGKFLAERTSNQSFGIVQGLSIIGTSAETFSSASPDQLKNAKAQLEKIVSHDFYETIIFVIGENGLHLAKSSNIKFPIIKVGNWIGPLLVDAALKKIKRVILFGYHGKLIKLAGGIFHTHNHLADARIEILVYLAVKEEVPIEMIKKLSLASNVEDALLLLESSSPSLADKLWNKLSDTVEKRSSEYLKRYITTDMKVAAIIFDRQRKIRWSGDNGKDYISSFKGF.

Belongs to the CbiD family.

The enzyme catalyses Co-precorrin-5B + S-adenosyl-L-methionine = Co-precorrin-6A + S-adenosyl-L-homocysteine. It participates in cofactor biosynthesis; adenosylcobalamin biosynthesis; cob(II)yrinate a,c-diamide from sirohydrochlorin (anaerobic route): step 6/10. Its function is as follows. Catalyzes the methylation of C-1 in cobalt-precorrin-5B to form cobalt-precorrin-6A. The polypeptide is Cobalt-precorrin-5B C(1)-methyltransferase (Prochlorococcus marinus (strain MIT 9515)).